A 622-amino-acid polypeptide reads, in one-letter code: Low affinity potassium transport system protein Kup (622 aa).

Helical transmembrane passes span 9–29 (LPAITLAAIGVVYGDIGTSPL), 49–69 (VFGFLSLIFWLLIFVVSIKYL), 103–123 (VIMGLIGGSFFYGEVVITPAI), 137–157 (PQLDTWIVPLSIIVLTLLFMI), 165–185 (VGKLFAPIMLTWFLILAGLGL), 213–233 (VSFIALGAVVLSITGVEALYA), 247–267 (WFTVVLPSLTLNYFGQGALLL), 276–296 (PFFLLAPDWALIPLLIIAALA), 337–357 (IYIPFVNWMLYVAVVIVIVSF), 363–383 (LAAAYGIAVTGTMVLTSILST), 396–416 (FVALILIAFLCVDIPLFTANL), and 419–439 (LLSGGWLPLSLGTVMFIVMTT).

The protein belongs to the HAK/KUP transporter (TC 2.A.72) family.

The protein resides in the cell inner membrane. It catalyses the reaction K(+)(in) + H(+)(in) = K(+)(out) + H(+)(out). In terms of biological role, responsible for the low-affinity transport of potassium into the cell. Likely operates as a K(+):H(+) symporter. This chain is Low affinity potassium transport system protein Kup, found in Escherichia coli O157:H7.